We begin with the raw amino-acid sequence, 584 residues long: ATP-dependent lipid A-core flippase (584 aa).

The next 5 helical transmembrane spans lie at 18–38 (LWPI…TLIL), 65–85 (VFVW…FSGF), 155–175 (IIGL…ILVL), 252–272 (IFDP…LYAA), and 277–297 (VMEM…IVLM). The region spanning 30-312 (VVASITLILN…LTNVSAQFQR (283 aa)) is the ABC transmembrane type-1 domain. Residues 344 to 580 (IIFDDVTFFY…QGIYAQLYKL (237 aa)) form the ABC transporter domain. 378–385 (GRSGSGKS) provides a ligand contact to ATP.

The protein belongs to the ABC transporter superfamily. Lipid exporter (TC 3.A.1.106) family. Homodimer.

Its subcellular location is the cell inner membrane. It catalyses the reaction ATP + H2O + lipid A-core oligosaccharideSide 1 = ADP + phosphate + lipid A-core oligosaccharideSide 2.. Its function is as follows. Involved in lipopolysaccharide (LPS) biosynthesis. Translocates lipid A-core from the inner to the outer leaflet of the inner membrane. Transmembrane domains (TMD) form a pore in the inner membrane and the ATP-binding domain (NBD) is responsible for energy generation. This chain is ATP-dependent lipid A-core flippase, found in Blochmanniella pennsylvanica (strain BPEN).